Consider the following 469-residue polypeptide: 3-isopropylmalate dehydratase large subunit (469 aa).

Cysteine 347, cysteine 408, and cysteine 411 together coordinate [4Fe-4S] cluster.

This sequence belongs to the aconitase/IPM isomerase family. LeuC type 1 subfamily. As to quaternary structure, heterodimer of LeuC and LeuD. Requires [4Fe-4S] cluster as cofactor.

It carries out the reaction (2R,3S)-3-isopropylmalate = (2S)-2-isopropylmalate. It participates in amino-acid biosynthesis; L-leucine biosynthesis; L-leucine from 3-methyl-2-oxobutanoate: step 2/4. Catalyzes the isomerization between 2-isopropylmalate and 3-isopropylmalate, via the formation of 2-isopropylmaleate. This Histophilus somni (strain 129Pt) (Haemophilus somnus) protein is 3-isopropylmalate dehydratase large subunit.